Reading from the N-terminus, the 1357-residue chain is DNA-directed RNA polymerase subunit beta (1357 aa).

It belongs to the RNA polymerase beta chain family. In terms of assembly, the RNAP catalytic core consists of 2 alpha, 1 beta, 1 beta' and 1 omega subunit. When a sigma factor is associated with the core the holoenzyme is formed, which can initiate transcription.

It carries out the reaction RNA(n) + a ribonucleoside 5'-triphosphate = RNA(n+1) + diphosphate. Functionally, DNA-dependent RNA polymerase catalyzes the transcription of DNA into RNA using the four ribonucleoside triphosphates as substrates. The sequence is that of DNA-directed RNA polymerase subunit beta from Ectopseudomonas mendocina (strain ymp) (Pseudomonas mendocina).